The following is a 235-amino-acid chain: Small ribosomal subunit protein uS3 (235 aa).

The region spanning Ile-39–Arg-107 is the KH type-2 domain. Residues Gln-215–Ala-235 are disordered.

This sequence belongs to the universal ribosomal protein uS3 family. As to quaternary structure, part of the 30S ribosomal subunit. Forms a tight complex with proteins S10 and S14.

Binds the lower part of the 30S subunit head. Binds mRNA in the 70S ribosome, positioning it for translation. The polypeptide is Small ribosomal subunit protein uS3 (Rhodopseudomonas palustris (strain TIE-1)).